The following is a 367-amino-acid chain: Outer membrane porin C (367 aa).

The signal sequence occupies residues 1-21; that stretch reads MKVKVLSLLVPALLVAGAANA. Topologically, residues 22–33 are periplasmic; it reads AEVYNKDGNKLD. The chain crosses the membrane as a beta stranded span at residues 34–42; sequence LYGKVDGLH. Residues 43-53 lie on the Extracellular side of the membrane; the sequence is YFSDNKDVDGD. A beta stranded transmembrane segment spans residues 54–63; sequence QTYMRLGFKG. Topologically, residues 64–73 are periplasmic; that stretch reads ETQVTDQLTG. Residues 74–84 traverse the membrane as a beta stranded segment; that stretch reads YGQWEYQIQGN. Topologically, residues 85-91 are extracellular; that stretch reads SAENENN. A beta stranded membrane pass occupies residues 92–101; that stretch reads SWTRVAFAGL. At 102 to 106 the chain is on the periplasmic side; the sequence is KFQDV. The beta stranded transmembrane segment at 107–115 threads the bilayer; the sequence is GSFDYGRNY. A loop L3; may constrict the pore region spans residues 116 to 133; sequence GVVYDVTSWTDVLPEFGG. Residues 116–141 lie on the Extracellular side of the membrane; sequence GVVYDVTSWTDVLPEFGGDTYGSDNF. A beta stranded transmembrane segment spans residues 142–154; that stretch reads MQQRGNGFATYRN. The Periplasmic portion of the chain corresponds to 155-163; the sequence is TDFFGLVDG. The beta stranded transmembrane segment at 164 to 171 threads the bilayer; it reads LNFAVQYQ. Residues 172-200 lie on the Extracellular side of the membrane; sequence GKNGNPSGEGFTSGVTNNGRDALRQNGDG. A beta stranded transmembrane segment spans residues 201–207; it reads VGGSITY. The Periplasmic segment spans residues 208-211; it reads DYEG. A beta stranded transmembrane segment spans residues 212 to 219; it reads FGIGGAIS. Over 220 to 241 the chain is Extracellular; that stretch reads SSKRTDAQNTAAYIGNGDRAET. The beta stranded transmembrane segment at 242–248 threads the bilayer; that stretch reads YTGGLKY. The Periplasmic segment spans residues 249–252; sequence DANN. Residues 253 to 260 traverse the membrane as a beta stranded segment; it reads IYLAAQYT. Residues 261–269 lie on the Extracellular side of the membrane; that stretch reads QTYNATRVG. A beta stranded transmembrane segment spans residues 270–286; the sequence is SLGWANKAQNFEAVAQY. At 287–291 the chain is on the periplasmic side; that stretch reads QFDFG. The chain crosses the membrane as a beta stranded span at residues 292-299; that stretch reads LRPSLAYL. At 300-318 the chain is on the extracellular side; it reads QSKGKNLGRGYDDEDILKY. A beta stranded membrane pass occupies residues 319–326; it reads VDVGATYY. Residues 327 to 330 are Periplasmic-facing; the sequence is FNKN. The beta stranded transmembrane segment at 331 to 338 threads the bilayer; it reads MSTYVDYK. Residues 339-358 are Extracellular-facing; that stretch reads INLLDDNQFTRDAGINTDNI. 3 residues coordinate Mg(2+): N340, L342, and T355. Residues 359–366 traverse the membrane as a beta stranded segment; it reads VALGLVYQ. Position 367 (F367) is a topological domain, periplasmic.

The protein belongs to the Gram-negative porin family. As to quaternary structure, homotrimer. Forms mixed heterotrimers with OmpF and with PhoE; other mixed heterotrimers are also probable.

It localises to the cell outer membrane. Functionally, forms pores that allow passive diffusion of small molecules across the outer membrane. In terms of biological role, (Microbial infection) Supports colicin E5 entry in the absence of its major receptor OmpF. Its function is as follows. (Microbial infection) A mixed OmpC-OmpF heterotrimer is the outer membrane receptor for toxin CdiA-EC536; polymorphisms in extracellular loops 4 and 5 of OmpC confer susceptibility to CdiA-EC536-mediated toxicity. In Escherichia coli (strain K12), this protein is Outer membrane porin C (ompC).